Reading from the N-terminus, the 238-residue chain is uncharacterized protein (238 aa).

The helical transmembrane segment at Thr-10–Val-33 threads the bilayer.

It is found in the membrane. This is an uncharacterized protein from Haemophilus influenzae (strain ATCC 51907 / DSM 11121 / KW20 / Rd).